The sequence spans 221 residues: Adenylate kinase (221 aa).

Gly-10 to Thr-15 contacts ATP. Positions Ser-30 to Val-59 are NMP. Residues Thr-31, Arg-36, Gly-57–Val-59, Gly-85–Arg-88, and Gln-92 each bind AMP. The interval Gly-122–Asp-159 is LID. Residues Arg-123 and Thr-132–Tyr-133 each bind ATP. AMP-binding residues include Arg-156 and Arg-167. ATP is bound at residue Gly-207.

Belongs to the adenylate kinase family. As to quaternary structure, monomer.

It is found in the cytoplasm. The catalysed reaction is AMP + ATP = 2 ADP. The protein operates within purine metabolism; AMP biosynthesis via salvage pathway; AMP from ADP: step 1/1. Catalyzes the reversible transfer of the terminal phosphate group between ATP and AMP. Plays an important role in cellular energy homeostasis and in adenine nucleotide metabolism. The sequence is that of Adenylate kinase from Cupriavidus necator (strain ATCC 17699 / DSM 428 / KCTC 22496 / NCIMB 10442 / H16 / Stanier 337) (Ralstonia eutropha).